Here is a 329-residue protein sequence, read N- to C-terminus: uncharacterized protein (329 aa).

The tract at residues Lys-109–Lys-147 is disordered. Low complexity predominate over residues Thr-116 to Ser-131.

It to the C-terminal of MG321/MPN_456.

This is an uncharacterized protein from Mycoplasma pneumoniae (strain ATCC 29342 / M129 / Subtype 1) (Mycoplasmoides pneumoniae).